We begin with the raw amino-acid sequence, 734 residues long: Fc receptor-like protein 3 (734 aa).

The signal sequence occupies residues 1 to 17 (MLLWLLLLILTPGREQS). Topologically, residues 18 to 573 (GVAPKAVLLL…GTSRNRTGLT (556 aa)) are extracellular. 6 Ig-like C2-type domains span residues 21-98 (PKAV…VEFS), 99-182 (PDWL…KPLN), 192-270 (PVLR…HSIK), 284-369 (PVSN…PILS), 383-470 (PVLT…LRVT), and 476-563 (PVLT…LNVT). Disulfide bonds link cysteine 44-cysteine 82, cysteine 120-cysteine 163, cysteine 211-cysteine 260, cysteine 309-cysteine 358, cysteine 404-cysteine 451, and cysteine 497-cysteine 544. Residue asparagine 561 is glycosylated (N-linked (GlcNAc...) asparagine). The helical transmembrane segment at 574–594 (AAGITGLVLSILVLAAAAALL) threads the bilayer. Over 595-734 (HYARARRKPG…VPRVLLASDH (140 aa)) the chain is Cytoplasmic. The disordered stretch occupies residues 603–655 (PGGLSATGTSSHSPSECQEPSSSRPSRIDPQEPTHSKPLAPMELEPMYSNVNP). Residues 608 to 627 (ATGTSSHSPSECQEPSSSRP) show a composition bias toward polar residues. Residues 628-637 (SRIDPQEPTH) show a composition bias toward basic and acidic residues. 4 short sequence motifs (ITIM motif) span residues 648–653 (PMYSNV), 660–665 (PIYSQI), 690–695 (VLYSEL), and 720–725 (ENYENV). Residues tyrosine 650, tyrosine 662, tyrosine 692, and tyrosine 722 each carry the phosphotyrosine modification. A disordered region spans residues 695 to 734 (LKKTHPDDSAGEASSRGRAHEEDDEENYENVPRVLLASDH).

As to quaternary structure, interacts (via phosphorylated ITIM motifs) with phosphatases INPP5D, PTPN6 and PTPN11. Interacts (via ITIM motifs) SYK and ZAP70. Interacts with IZUMO1R/JUNO. Interacts (via extracellular domain) with IZUMO1; the interaction replaces IZUMO1R/JUNO as IZUMO1 receptor after adhesion between sperm and egg. Phosphorylated on cytoplasmic tyrosines; required for interaction with protein tyrosine phosphatases and protein tyrosine kinases. As to expression, primarily expressed in secondary lymphoid tissues by mature subsets of B-cells. Low expression on transitional B cells which increases to higher surface expression on mature and memory B-cells with innate-like features (at protein level). Expressed a low levels in naive and germinal center B-cells but also expressed in NK cells (at protein level). Expressed in unfertilized oocytes (at protein level). Expressed in a population of thymically derived naturally occurring regulatory T-cells that exhibits a memory phenotype, specialized in suppressing immune response to self-antigens. Detected in spleen, lymph node, peripheral blood lymphocytes, thymus, bone marrow, kidney, salivary gland, adrenal gland and uterus.

It localises to the cell membrane. It is found in the cell projection. Its subcellular location is the microvillus membrane. Functionally, promotes TLR9-induced B-cell proliferation, activation and survival but inhibits antibody production and suppresses plasma cell differentiation. Enhances activation of NF-kappa-B and MAPK signaling pathways in TLR9 stimulated B-cells. Has inhibitory potentional on B-cell receptor (BCR)-mediated signaling, possibly through association with SH2 domain-containing phosphatases. Inhibits cell tyrosine phosphorylation, calcium mobilization and activation-induced cell death induced through BCR signaling. Regulatory T-cells expressing FCRL3 exhibit a memory phenotype, are relatively nonresponsive to antigenic stimulation in presence of IL2 and have reduced capacity to suppress the proliferation of effector T-cells. Acts as a human-specific epitope on the cell surface of oocytes (oolemma) and plays a role during sperm-egg adhesion and fusion. Interacts with the IZUMO1-IZUMO1R/JUNO sperm-egg complex and replaces IZUMO1R/JUNO as IZUMO1 receptor during fertilization, thereby permitting species-specific gamete fusion. This chain is Fc receptor-like protein 3, found in Homo sapiens (Human).